A 190-amino-acid polypeptide reads, in one-letter code: dCTP deaminase (190 aa).

Residue 107-112 (KSTYAR) coordinates dCTP. The active-site Proton donor/acceptor is the Glu-133. DCTP is bound by residues Gln-152, Tyr-166, and Gln-176.

Belongs to the dCTP deaminase family. Homotrimer.

The enzyme catalyses dCTP + H2O + H(+) = dUTP + NH4(+). It participates in pyrimidine metabolism; dUMP biosynthesis; dUMP from dCTP (dUTP route): step 1/2. In terms of biological role, catalyzes the deamination of dCTP to dUTP. This is dCTP deaminase from Campylobacter hominis (strain ATCC BAA-381 / DSM 21671 / CCUG 45161 / LMG 19568 / NCTC 13146 / CH001A).